Here is a 474-residue protein sequence, read N- to C-terminus: Probable cytosol aminopeptidase (474 aa).

2 residues coordinate Mn(2+): Lys-237 and Asp-242. The active site involves Lys-249. Mn(2+) is bound by residues Asp-260, Asp-319, and Glu-321. The active site involves Arg-323.

It belongs to the peptidase M17 family. Mn(2+) serves as cofactor.

The protein resides in the cytoplasm. It catalyses the reaction Release of an N-terminal amino acid, Xaa-|-Yaa-, in which Xaa is preferably Leu, but may be other amino acids including Pro although not Arg or Lys, and Yaa may be Pro. Amino acid amides and methyl esters are also readily hydrolyzed, but rates on arylamides are exceedingly low.. The enzyme catalyses Release of an N-terminal amino acid, preferentially leucine, but not glutamic or aspartic acids.. Presumably involved in the processing and regular turnover of intracellular proteins. Catalyzes the removal of unsubstituted N-terminal amino acids from various peptides. This chain is Probable cytosol aminopeptidase, found in Helicobacter hepaticus (strain ATCC 51449 / 3B1).